The primary structure comprises 410 residues: G-protein coupled receptor family C group 5 member B (410 aa).

The signal sequence occupies residues 1 to 28; sequence MFLVLERKMRTHQVFPLPLLLVIASVAS. Residues 29-56 are Extracellular-facing; it reads ENASTSRGCGLDLLPQYVSLCDLDAIWG. N-linked (GlcNAc...) asparagine glycosylation occurs at Asn-30. Residues 57-77 form a helical membrane-spanning segment; that stretch reads IVVEAVAGAGALITLLLMLIL. The Cytoplasmic portion of the chain corresponds to 78 to 94; that stretch reads LVRLPFIKDKERKRPVC. A helical membrane pass occupies residues 95-115; sequence LHFLFLLGTLGLFGLTFAFII. Residues 116 to 126 lie on the Extracellular side of the membrane; the sequence is QMDETICSIRR. Residues 127–147 traverse the membrane as a helical segment; that stretch reads FLWGVLFALCFSCLLSQAWRV. Residues 148–164 lie on the Cytoplasmic side of the membrane; sequence RRLVRQGTSPASWQLVS. Residues 165–185 traverse the membrane as a helical segment; the sequence is LALCLMLVQVIIATEWLVLTV. Residues 186–199 lie on the Extracellular side of the membrane; the sequence is LRDTKPACAYEPMD. The helical transmembrane segment at 200–220 threads the bilayer; sequence FVMALIYDMVLLAITLAQSLF. Over 221–234 the chain is Cytoplasmic; sequence TLCGKFKRWKVNGA. Residues 235–255 traverse the membrane as a helical segment; sequence FILVTTFLSALIWVVWMTMYL. At 256-271 the chain is on the extracellular side; the sequence is FGNSLIKQGDAWSDPT. The chain crosses the membrane as a helical span at residues 272–292; that stretch reads LAITLAASGWVFVIFHAIPEI. At 293–410 the chain is on the cytoplasmic side; the sequence is HYTLLPPLQE…PPSHTGRHHW (118 aa). A Phosphoserine modification is found at Ser-355. The tract at residues 356-381 is disordered; sequence LEQRSSSLGKKPSSLGNRPSAPFRSN. The span at 360 to 371 shows a compositional bias: low complexity; that stretch reads SSSLGKKPSSLG.

It belongs to the G-protein coupled receptor 3 family.

Its subcellular location is the cell membrane. The protein localises to the cytoplasmic vesicle membrane. Its function is as follows. G-protein coupled receptor involved in the regulation of cell volume. This is G-protein coupled receptor family C group 5 member B (Gprc5b) from Mus musculus (Mouse).